Here is a 520-residue protein sequence, read N- to C-terminus: Cytochrome b5 reductase 4 (520 aa).

Residue Met1 is modified to N-acetylmethionine. The tract at residues 1–27 (MLNVPSQAFPAPGSQQRVASQGRSKVP) is disordered. The segment covering 13–23 (GSQQRVASQGR) has biased composition (polar residues). One can recognise a Cytochrome b5 heme-binding domain in the interval 54–130 (LIEVTEEELK…LKECLVGRMA (77 aa)). Heme is bound by residues His89 and His112. The region spanning 164-255 (PSSPSYDWFQ…KETVSWKCLG (92 aa)) is the CS domain. The FAD-binding FR-type domain maps to 272-384 (LYYRQCQLIS…SGPEGNFKVS (113 aa)). FAD contacts are provided by residues 364-379 (DRLQ…GPEG) and 391-423 (DLFL…KVKL).

The protein belongs to the flavoprotein pyridine nucleotide cytochrome reductase family. Requires FAD as cofactor. Isoform 2 is expressed in testis, brain, skeletal muscle and in the male germline.

It is found in the endoplasmic reticulum. It carries out the reaction 2 Fe(III)-[cytochrome b5] + NADH = 2 Fe(II)-[cytochrome b5] + NAD(+) + H(+). Functionally, NADH-cytochrome b5 reductase involved in endoplasmic reticulum stress response pathway. Plays a critical role in protecting pancreatic beta-cells against oxidant stress, possibly by protecting the cell from excess buildup of reactive oxygen species (ROS). The polypeptide is Cytochrome b5 reductase 4 (Cyb5r4) (Rattus norvegicus (Rat)).